A 453-amino-acid chain; its full sequence is Gastrin/cholecystokinin type B receptor (453 aa).

Over 1–57 the chain is Extracellular; sequence MDLLKLNRSLQGPGPGSGSSLCRPGVSLLNSSSAGNLSCETPRIRGTGTRELELTIR. N7, N30, and N36 each carry an N-linked (GlcNAc...) asparagine glycan. Residues 58–79 traverse the membrane as a helical segment; sequence ITLYAVIFLMSVGGNVLIIVVL. The Cytoplasmic portion of the chain corresponds to 80 to 87; that stretch reads GLSRRLRT. A helical transmembrane segment spans residues 88–109; sequence VTNAFLLSLAVSDLLLAVACMP. Over 110 to 131 the chain is Extracellular; that stretch reads FTLLPNLMGTFIFGTVICKAVS. A disulfide bridge links C127 with C205. A helical membrane pass occupies residues 132–150; sequence YLMGVSVSVSTLNLAAIAL. Topologically, residues 151–170 are cytoplasmic; sequence ERYSAICRPLQARVWQTRSH. The chain crosses the membrane as a helical span at residues 171–189; it reads AARVILATWLLSGLLMVPY. Over 190 to 219 the chain is Extracellular; the sequence is PVYTVVQPVGPRILQCMHLWPSERVQQMWS. The chain crosses the membrane as a helical span at residues 220–242; it reads VLLLILLFFIPGVVMAVAYGLIS. The Cytoplasmic segment spans residues 243 to 339; it reads RELYLGLRFD…KLLAKKRVVR (97 aa). Residues 257–276 are disordered; it reads SETQSRVRNQGGLPGGAAAP. A helical transmembrane segment spans residues 340–361; it reads MLLVIVLLFFVCWLPVYSANTW. Residues 362 to 379 lie on the Extracellular side of the membrane; the sequence is RAFDGPGARRALAGAPIS. Residues 380–400 form a helical membrane-spanning segment; the sequence is FIHLLSYTSACANPLVYCFMH. The Cytoplasmic portion of the chain corresponds to 401–453; that stretch reads RRFRQACLDTCARCCPRPPRARPRPLPDEDPPTPSIASLSRLSYTTISTLGPG. The S-palmitoyl cysteine moiety is linked to residue C414.

This sequence belongs to the G-protein coupled receptor 1 family.

The protein localises to the cell membrane. Its function is as follows. Receptor for gastrin and cholecystokinin. The CCK-B receptors occur throughout the central nervous system where they modulate anxiety, analgesia, arousal, and neuroleptic activity. This receptor mediates its action by association with G proteins that activate a phosphatidylinositol-calcium second messenger system. In Mus musculus (Mouse), this protein is Gastrin/cholecystokinin type B receptor (Cckbr).